Here is a 98-residue protein sequence, read N- to C-terminus: Defensin-A1 (98 aa).

Positions 1-19 (MQTLSFLLALLFLVAQTPA) are cleaved as a signal peptide. A propeptide spanning residues 20-62 (QPTGEGEKGGTIQEPEATEAQDTAAVLMAAGAADGDDSDTKQL) is cleaved from the precursor. Cystine bridges form between C67-C94, C69-C83, and C73-C93. The propeptide occupies 97 to 98 (IK).

This sequence belongs to the alpha-defensin family. As to expression, highly expressed in intestine, and expressed at lower levels in lung and spleen.

It is found in the secreted. Functionally, has antimicrobial activity. The polypeptide is Defensin-A1 (Ornithorhynchus anatinus (Duckbill platypus)).